The following is a 360-amino-acid chain: Membrane-bound lytic murein transglycosylase C (360 aa).

The signal sequence occupies residues 1 to 16 (MKKLLALAVIAPLLIS). Cys17 carries the N-palmitoyl cysteine lipid modification. A lipid anchor (S-diacylglycerol cysteine) is attached at Cys17.

This sequence belongs to the transglycosylase Slt family.

It is found in the cell outer membrane. The enzyme catalyses Exolytic cleavage of the (1-&gt;4)-beta-glycosidic linkage between N-acetylmuramic acid (MurNAc) and N-acetylglucosamine (GlcNAc) residues in peptidoglycan, from either the reducing or the non-reducing ends of the peptidoglycan chains, with concomitant formation of a 1,6-anhydrobond in the MurNAc residue.. Its function is as follows. Murein-degrading enzyme. May play a role in recycling of muropeptides during cell elongation and/or cell division. The chain is Membrane-bound lytic murein transglycosylase C from Salmonella arizonae (strain ATCC BAA-731 / CDC346-86 / RSK2980).